The following is a 924-amino-acid chain: DNA repair and recombination protein RDH54 (924 aa).

Positions 1–10 are enriched in basic and acidic residues; sequence MQIPKYENKP. Disordered regions lie at residues 1-21 and 155-182; these read MQIP…GSNK and EALS…KNDG. Residues 168–178 are compositionally biased toward low complexity; the sequence is TTSTTETVPST. Residues 299–487 form the Helicase ATP-binding domain; sequence LENDSDISGC…FTIIDFINPG (189 aa). 346-353 contacts ATP; the sequence is IPLTGLCK. A DEGH box motif is present at residues 472–475; that stretch reads NDLN. A Glycyl lysine isopeptide (Lys-Gly) (interchain with G-Cter in ubiquitin) cross-link involves residue lysine 615. The region spanning 631–790 is the Helicase C-terminal domain; the sequence is KLRVLMTLLE…DSEMRNKESS (160 aa).

Belongs to the SNF2/RAD54 helicase family. Interacts with RAD51 and DMC1.

The protein resides in the nucleus. It catalyses the reaction ATP + H2O = ADP + phosphate + H(+). In terms of biological role, involved in the recombinational repair of double-strand breaks (DSB) in DNA during mitosis and meiosis. Has DNA dependent ATPase activity. Promotes D-loop (displacement loop) formation with RAD51 recombinase. Modifies the topology of double-stranded DNA during the D-loop reaction to facilitate the invasion of the homologous duplex molecule by the initiating single-stranded DNA substrate. Required for adaptation from G2/M checkpoint arrest induced by a double strand break, by participating in monitoring the extent of single-stranded DNA produced by resection of DNA ends. This role is distinct from its roles in recombination. Promotes colocalization of RAD51 and DMC1 during meiotic recombination. Involved in crossover interference. This chain is DNA repair and recombination protein RDH54 (RDH54), found in Saccharomyces cerevisiae (strain AWRI1631) (Baker's yeast).